The primary structure comprises 108 residues: IRALPWDNPAFVAPVLGLLGFIPGGAGGIVNASFTLDYVVHNTAWVPGHFHLQVASLVTLTAMGSLYWLLPNLTGKPISDAQRRLGLAVVWLWFLGMMIMAVGLHWAG.

Residues 10–30 (AFVAPVLGLLGFIPGGAGGIV) traverse the membrane as a helical segment. H49 serves as a coordination point for heme a3. A run of 2 helical transmembrane segments spans residues 50–70 (FHLQVASLVTLTAMGSLYWLL) and 85–105 (LGLAVVWLWFLGMMIMAVGLH). A Fe(II)-heme a-binding site is contributed by H51.

It belongs to the heme-copper respiratory oxidase family. The cofactor is heme. It depends on Cu cation as a cofactor.

The protein resides in the cell membrane. It catalyses the reaction 4 Fe(II)-[cytochrome c] + O2 + 8 H(+)(in) = 4 Fe(III)-[cytochrome c] + 2 H2O + 4 H(+)(out). It functions in the pathway energy metabolism; oxidative phosphorylation. The protein is Cytochrome c oxidase subunit 1 (cbaA) of Thermus thermophilus.